The primary structure comprises 1274 residues: Myosin-binding protein C, cardiac-type (1274 aa).

Methionine 1 is subject to N-acetylmethionine. Residues 8-95 enclose the Ig-like C2-type 1 domain; the sequence is PVSAFTKKPR…SKVKFDLKVT (88 aa). Serine 47 carries the post-translational modification Phosphoserine. Over residues 95 to 104 the composition is skewed to basic and acidic residues; sequence TEPAPPEKAE. A disordered region spans residues 95–153; it reads TEPAPPEKAESAVAPTSMEAPETPKEVPALATQLEGNVSSPEGSVSVTQDGSVAGSQGA. Threonine 117 carries the phosphothreonine modification. Over residues 128-149 the composition is skewed to polar residues; it reads LEGNVSSPEGSVSVTQDGSVAG. Residues 157-259 enclose the Ig-like C2-type 2 domain; the sequence is PIGLFLMRPQ…KFDSCNFNLT (103 aa). Residues glutamine 212, histidine 214, glutamate 227, and histidine 229 each contribute to the Zn(2+) site. Serine 279 bears the Phosphoserine mark. Threonine 287 carries the phosphothreonine; by PKA and PKC modification. Serine 288 bears the Phosphoserine mark. Serine 307 carries the phosphoserine; by PKA modification. Phosphoserine is present on residues serine 312 and serine 427. 2 consecutive Ig-like C2-type domains span residues 361–452 and 452–546; these read KKST…VKEP and PPVL…KKLE. A disulfide bridge connects residues cysteine 436 and cysteine 443. Serine 459 and serine 550 each carry phosphoserine. Threonine 607 carries the post-translational modification Phosphothreonine. The 121-residue stretch at 645–765 folds into the Ig-like C2-type 5 domain; it reads PKIHLDCPGS…PVGEDQVNLT (121 aa). Fibronectin type-III domains lie at 774–870 and 872–967; these read APAA…IGPP and EPTH…VQEI. The region spanning 971–1059 is the Ig-like C2-type 6 domain; that stretch reads PRLQLPRHLR…ENMEDKATLV (89 aa). Residues 1068–1163 enclose the Fibronectin type-III 3 domain; it reads PPLDIRVVET…TKEPIFIPRP (96 aa). Residues 1181–1269 enclose the Ig-like C2-type 7 domain; it reads PSFTQPLTNR…GEAQCECRLE (89 aa). Residue arginine 1241 is modified to Omega-N-methylarginine.

It belongs to the immunoglobulin superfamily. MyBP family. In terms of processing, substrate for phosphorylation by PKA and PKC. Reversible phosphorylation appears to modulate contraction. Polyubiquitinated.

In terms of biological role, thick filament-associated protein located in the crossbridge region of vertebrate striated muscle a bands. In vitro it binds MHC, F-actin and native thin filaments, and modifies the activity of actin-activated myosin ATPase. It may modulate muscle contraction or may play a more structural role. This is Myosin-binding protein C, cardiac-type (Mybpc3) from Rattus norvegicus (Rat).